Reading from the N-terminus, the 334-residue chain is Serine/threonine-protein kinase SAPK3 (334 aa).

One can recognise a Protein kinase domain in the interval 5-261 (YEALKELGAG…IPEIKKHTWF (257 aa)). Residues 11–19 (LGAGNFGVA) and Lys34 contribute to the ATP site. The Proton acceptor role is filled by Asp124.

The protein belongs to the protein kinase superfamily. Ser/Thr protein kinase family. Autophosphorylated in presence of Ca(2+). Expressed in leaves and maturing seeds, but not in roots and stems of field-grown plants.

It localises to the cytoplasm. Its subcellular location is the nucleus. It carries out the reaction L-seryl-[protein] + ATP = O-phospho-L-seryl-[protein] + ADP + H(+). The enzyme catalyses L-threonyl-[protein] + ATP = O-phospho-L-threonyl-[protein] + ADP + H(+). With respect to regulation, activated by phosphorylation. May play a role in signal transduction of hyperosmotic response. The polypeptide is Serine/threonine-protein kinase SAPK3 (SAPK3) (Oryza sativa subsp. indica (Rice)).